The primary structure comprises 247 residues: Probable transcriptional regulatory protein MS0710 (247 aa).

The protein belongs to the TACO1 family.

Its subcellular location is the cytoplasm. This is Probable transcriptional regulatory protein MS0710 from Mannheimia succiniciproducens (strain KCTC 0769BP / MBEL55E).